Consider the following 469-residue polypeptide: 3-isopropylmalate dehydratase large subunit (469 aa).

[4Fe-4S] cluster is bound by residues Cys348, Cys409, and Cys412.

This sequence belongs to the aconitase/IPM isomerase family. LeuC type 1 subfamily. Heterodimer of LeuC and LeuD. The cofactor is [4Fe-4S] cluster.

It carries out the reaction (2R,3S)-3-isopropylmalate = (2S)-2-isopropylmalate. It participates in amino-acid biosynthesis; L-leucine biosynthesis; L-leucine from 3-methyl-2-oxobutanoate: step 2/4. Its function is as follows. Catalyzes the isomerization between 2-isopropylmalate and 3-isopropylmalate, via the formation of 2-isopropylmaleate. The sequence is that of 3-isopropylmalate dehydratase large subunit from Nitrosococcus oceani (strain ATCC 19707 / BCRC 17464 / JCM 30415 / NCIMB 11848 / C-107).